Reading from the N-terminus, the 86-residue chain is MQDELFETEKAPQKNTKNAKNAPKKSFEEHAHSLEQAIDRLNDSNLSLKDGMDLYKTAMQELFLAQKLLENAYLEYEKLQTPDKKA.

The tract at residues M1–S26 is disordered.

This sequence belongs to the XseB family. Heterooligomer composed of large and small subunits.

The protein localises to the cytoplasm. It carries out the reaction Exonucleolytic cleavage in either 5'- to 3'- or 3'- to 5'-direction to yield nucleoside 5'-phosphates.. Bidirectionally degrades single-stranded DNA into large acid-insoluble oligonucleotides, which are then degraded further into small acid-soluble oligonucleotides. The sequence is that of Exodeoxyribonuclease 7 small subunit from Helicobacter pylori (strain Shi470).